Here is a 1121-residue protein sequence, read N- to C-terminus: Pleckstrin homology domain-containing family A member 7 (1121 aa).

2 consecutive WW domains span residues 9–42 (DTLP…HPRT) and 54–87 (SDLP…HPVT). A disordered region spans residues 105–137 (PHMSKQDRNQRPSSMVSETSTAGTASTLEAKPG). Positions 115–131 (RPSSMVSETSTAGTAST) are enriched in polar residues. One can recognise a PH domain in the interval 164–282 (PVVVRGWLHK…WVRAMNQAAQ (119 aa)). The interval 299 to 514 (QAVPQANHTE…LKMSSEERRA (216 aa)) is disordered. Basic and acidic residues-rich tracts occupy residues 308 to 356 (ESCH…EGKR) and 437 to 446 (HWARAQKGDS). Residues 460–475 (PGQSLSFPENYQTLPK) are compositionally biased toward polar residues. The segment covering 497 to 514 (YAQDRASHLKMSSEERRA) has biased composition (basic and acidic residues). Phosphoserine is present on residues Ser536, Ser545, Ser569, Ser604, Ser608, and Ser612. Residues 538–696 (TAPICLGSPE…AESDTDVKLS (159 aa)) form an interaction with CTNND1 region. The disordered stretch occupies residues 547 to 632 (EFTDQGRSRS…NSSHVDRRSM (86 aa)). The segment covering 567 to 582 (PPSPSDIPPPGPPRVF) has biased composition (pro residues). The span at 589-605 (TPAERVTVKPPDQRRSV) shows a compositional bias: basic and acidic residues. Residues 700–801 (EQDRVLQDLE…LQEQHRRAFF (102 aa)) are a coiled coil. 2 disordered regions span residues 841-876 (RKTV…VRTP) and 888-971 (YVPY…ELGQ). Ser858, Ser860, and Ser867 each carry phosphoserine. Over residues 861–871 (KPPPQPSPPTS) the composition is skewed to pro residues. Residue Thr870 is modified to Phosphothreonine. Residues Ser871, Ser903, and Ser907 each carry the phosphoserine modification. Over residues 933-942 (DQPPAVPPLP) the composition is skewed to pro residues. The span at 958–969 (RQSDERKRDREL) shows a compositional bias: basic and acidic residues. Ser986 bears the Phosphoserine mark. 2 disordered regions span residues 1003–1028 (GLVG…RLQQ) and 1082–1121 (RHQK…GSVC). Positions 1067–1094 (QRGKMSAEEQLERMKRHQKALVRERKRT) form a coiled coil. The span at 1082 to 1094 (RHQKALVRERKRT) shows a compositional bias: basic residues.

In terms of assembly, interacts with CAMSAP3 and CTNND1. Interacts (via WW domains) with TSPAN33 (via cytoplasmic domain) and with PDZD11; the interaction with TSPAN33 is dependent on PDZD11 being bound to PLEKHA7 and facilitates the docking of ADAM10 to zonula adherens through interaction of TSPAN33 with ADAM10.

The protein resides in the cell junction. Its subcellular location is the adherens junction. It localises to the cytoplasm. The protein localises to the cytoskeleton. It is found in the microtubule organizing center. The protein resides in the centrosome. In terms of biological role, required for zonula adherens biogenesis and maintenance. Acts via its interaction with CAMSAP3, which anchors microtubules at their minus-ends to zonula adherens, leading to the recruitment of KIFC3 kinesin to the junctional site. Mediates docking of ADAM10 to zonula adherens through a PDZD11-dependent interaction with the ADAM10-binding protein TSPAN33. This Homo sapiens (Human) protein is Pleckstrin homology domain-containing family A member 7 (PLEKHA7).